Consider the following 860-residue polypeptide: JmjC domain-containing histone demethylation protein 1 (860 aa).

Disordered stretches follow at residues 1–45 (MSEQ…EEGK), 117–212 (STSP…PKRK), and 408–440 (DVKE…GGEI). The PHD-type zinc-finger motif lies at 23–116 (PEPCPLCRET…KWYCAPCLAR (94 aa)). Composition is skewed to basic and acidic residues over residues 183–192 (IDMKSEREQQ) and 408–433 (DVKE…HLTE). The region spanning 416 to 579 (NDSREGSEIR…TQLRLRQIEI (164 aa)) is the JmjC domain. Residue Thr471 coordinates substrate. The Fe cation site is built by His474 and Asp476. Lys491 is a substrate binding site. His547 contributes to the Fe cation binding site. 2 disordered regions span residues 744-795 (HPPA…ANEN) and 837-860 (GPKL…DIDH). The segment covering 750-763 (ENRQSPQIETTTVQ) has biased composition (polar residues). The span at 767-795 (PSTSSSDAISGSGPGASPGASANGGANEN) shows a compositional bias: low complexity.

The protein belongs to the JHDM1 histone demethylase family. It depends on Fe(2+) as a cofactor.

The protein resides in the nucleus. The catalysed reaction is N(6),N(6)-dimethyl-L-lysyl(36)-[histone H3] + 2 2-oxoglutarate + 2 O2 = L-lysyl(36)-[histone H3] + 2 formaldehyde + 2 succinate + 2 CO2. Functionally, histone demethylase that specifically demethylates 'Lys-36' of histone H3, thereby playing a central role in histone code. This chain is JmjC domain-containing histone demethylation protein 1 (JHD1), found in Cryptococcus neoformans var. neoformans serotype D (strain JEC21 / ATCC MYA-565) (Filobasidiella neoformans).